Here is a 755-residue protein sequence, read N- to C-terminus: Photosystem I P700 chlorophyll a apoprotein A1 (755 aa).

The next 8 membrane-spanning stretches (helical) occupy residues 72-95, 158-181, 197-221, 297-315, 352-375, 391-417, 439-461, and 536-554; these read IFSA…FHGA, LYCT…FHYH, LNHH…HVSL, TAHH…GHMY, WHAQ…QHMY, LSLF…IFMV, AIIS…LYVH, and FMVH…LILL. 2 residues coordinate [4Fe-4S] cluster: Cys-578 and Cys-587. The next 2 membrane-spanning stretches (helical) occupy residues 594–615 and 669–691; these read HVFL…HFSW and LSAY…MFLF. Chlorophyll a' is bound at residue His-680. 2 residues coordinate chlorophyll a: Met-688 and Tyr-696. Trp-697 contributes to the phylloquinone binding site. The chain crosses the membrane as a helical span at residues 729–749; that stretch reads AVGVAHYLLGGIATTWAFFLA.

It belongs to the PsaA/PsaB family. The PsaA/B heterodimer binds the P700 chlorophyll special pair and subsequent electron acceptors. PSI consists of a core antenna complex that captures photons, and an electron transfer chain that converts photonic excitation into a charge separation. The cyanobacterial PSI reaction center is composed of one copy each of PsaA,B,C,D,E,F,I,J,K,L,M and X, and forms trimeric complexes. Requires PSI electron transfer chain: 5 chlorophyll a, 1 chlorophyll a', 2 phylloquinones and 3 4Fe-4S clusters. PSI core antenna: 90 chlorophyll a, 22 carotenoids, 3 phospholipids and 1 galactolipid. P700 is a chlorophyll a/chlorophyll a' dimer, A0 is one or more chlorophyll a, A1 is one or both phylloquinones and FX is a shared 4Fe-4S iron-sulfur center. as cofactor.

Its subcellular location is the cellular thylakoid membrane. It carries out the reaction reduced [plastocyanin] + hnu + oxidized [2Fe-2S]-[ferredoxin] = oxidized [plastocyanin] + reduced [2Fe-2S]-[ferredoxin]. Functionally, psaA and PsaB bind P700, the primary electron donor of photosystem I (PSI), as well as the electron acceptors A0, A1 and FX. PSI is a plastocyanin/cytochrome c6-ferredoxin oxidoreductase, converting photonic excitation into a charge separation, which transfers an electron from the donor P700 chlorophyll pair to the spectroscopically characterized acceptors A0, A1, FX, FA and FB in turn. Oxidized P700 is reduced on the lumenal side of the thylakoid membrane by plastocyanin or cytochrome c6. The sequence is that of Photosystem I P700 chlorophyll a apoprotein A1 from Thermostichus vulcanus (Synechococcus vulcanus).